Consider the following 564-residue polypeptide: Probable metalloprotease ARX1 (564 aa).

It belongs to the peptidase M24 family. In terms of assembly, component of the nucleoplasmic and cytoplasmic pre-60S ribosomal particles.

The protein localises to the cytoplasm. The protein resides in the nucleus. In terms of biological role, probable metalloprotease involved in proper assembly of pre-ribosomal particles during the biogenesis of the 60S ribosomal subunit. Accompanies the pre-60S particles to the cytoplasm. The polypeptide is Probable metalloprotease ARX1 (ARX1) (Debaryomyces hansenii (strain ATCC 36239 / CBS 767 / BCRC 21394 / JCM 1990 / NBRC 0083 / IGC 2968) (Yeast)).